A 311-amino-acid polypeptide reads, in one-letter code: MIPEEIYKILRKQRYQIDGHTAVKLCGWVRKKMLEDKNCYKSKFYGIETHRCIQCTPSVIWCQQNCIFCWRVLPRDIGIDISQIKEPKWEEPEVVYEKILAMHKRIIMGYAGVLDRVGEKKFKEALEPKHVAISLSGEPTLYPYLDELIKIFHKNGFTTFVVSNGILTDVIEKIEPTQLYISLDAYDLDSYRRICGGKKEYWESILNTLDILKEKKRTCIRTTLIRGYNDDILKFVELYERADVHFIELKSYMHVGYSQKRLKKEDMLQHDEILKLAKMLDENSSYKLIDDSEDSRVALLQNENRKINPKL.

[4Fe-4S] cluster is bound by residues cysteine 26, cysteine 39, cysteine 52, cysteine 62, cysteine 66, and cysteine 69. One can recognise a Radical SAM core domain in the interval 45–283 (YGIETHRCIQ…LKLAKMLDEN (239 aa)).

It belongs to the TYW1 family. In terms of assembly, monomer. [4Fe-4S] cluster serves as cofactor.

It is found in the cytoplasm. It catalyses the reaction N(1)-methylguanosine(37) in tRNA(Phe) + pyruvate + S-adenosyl-L-methionine = 4-demethylwyosine(37) in tRNA(Phe) + 5'-deoxyadenosine + L-methionine + CO2 + H2O. Functionally, component of the wyosine derivatives biosynthesis pathway that catalyzes the condensation of N-methylguanine with 2 carbon atoms from pyruvate to form the tricyclic 4-demethylwyosine (imG-14) on guanosine-37 of tRNA(Phe). The chain is S-adenosyl-L-methionine-dependent tRNA 4-demethylwyosine synthase from Methanocaldococcus jannaschii (strain ATCC 43067 / DSM 2661 / JAL-1 / JCM 10045 / NBRC 100440) (Methanococcus jannaschii).